A 200-amino-acid polypeptide reads, in one-letter code: Glycerol-3-phosphate acyltransferase (200 aa).

A run of 5 helical transmembrane segments spans residues 1–21, 51–71, 84–104, 116–136, and 159–179; these read MITV…FAVV, VAAA…VVVA, VIAS…FLAF, ILLG…IIVA, and FLLQ…LLIL.

The protein belongs to the PlsY family. As to quaternary structure, probably interacts with PlsX.

The protein resides in the cell inner membrane. It carries out the reaction an acyl phosphate + sn-glycerol 3-phosphate = a 1-acyl-sn-glycero-3-phosphate + phosphate. It functions in the pathway lipid metabolism; phospholipid metabolism. In terms of biological role, catalyzes the transfer of an acyl group from acyl-phosphate (acyl-PO(4)) to glycerol-3-phosphate (G3P) to form lysophosphatidic acid (LPA). This enzyme utilizes acyl-phosphate as fatty acyl donor, but not acyl-CoA or acyl-ACP. This Nitrosomonas eutropha (strain DSM 101675 / C91 / Nm57) protein is Glycerol-3-phosphate acyltransferase.